A 66-amino-acid polypeptide reads, in one-letter code: U-scoloptoxin(04)-Ssd2a (66 aa).

The first 19 residues, 1–19 (MKAIYILSVLLLMMLPILS), serve as a signal peptide directing secretion.

It belongs to the scoloptoxin-04 family. Contains 2 disulfide bonds. Expressed by the venom gland.

It localises to the secreted. This chain is U-scoloptoxin(04)-Ssd2a, found in Scolopendra dehaani (Thai centipede).